A 182-amino-acid chain; its full sequence is NADH-quinone oxidoreductase subunit B (182 aa).

Residues C61, C62, C126, and C156 each contribute to the [4Fe-4S] cluster site.

This sequence belongs to the complex I 20 kDa subunit family. NDH-1 is composed of 14 different subunits. Subunits NuoB, C, D, E, F, and G constitute the peripheral sector of the complex. Requires [4Fe-4S] cluster as cofactor.

It localises to the cell inner membrane. It catalyses the reaction a quinone + NADH + 5 H(+)(in) = a quinol + NAD(+) + 4 H(+)(out). Its function is as follows. NDH-1 shuttles electrons from NADH, via FMN and iron-sulfur (Fe-S) centers, to quinones in the respiratory chain. The immediate electron acceptor for the enzyme in this species is believed to be ubiquinone. Couples the redox reaction to proton translocation (for every two electrons transferred, four hydrogen ions are translocated across the cytoplasmic membrane), and thus conserves the redox energy in a proton gradient. The polypeptide is NADH-quinone oxidoreductase subunit B (Xanthomonas oryzae pv. oryzae (strain PXO99A)).